A 267-amino-acid polypeptide reads, in one-letter code: Mannose-specific lectin 1 (267 aa).

An N-terminal signal peptide occupies residues Met1 to Ala26. 2 consecutive Bulb-type lectin domains span residues Thr29–Pro134 and Asn148–Lys255. Beta-D-mannose contacts are provided by residues Gln54–Asn58, Tyr62, Trp66, Gln67, Gln173–Asn177, Tyr181, and Tyr185–Gln188. The short motif at Gln54–Tyr62 is the Carbohydrate-binding motif 1 element. Intrachain disulfides connect Cys57–Cys77 and Cys176–Cys198. A Carbohydrate-binding motif 2 motif is present at residues Gln173–Tyr181.

As to quaternary structure, forms heterotetramer of 2 chains 1 and 2 chains 2 arranged as a dimer of chain 1 and chain 2 heterodimers.

The protein resides in the secreted. In terms of biological role, mannose-specific lectin. Shows agglutinating activity towards erythrocytes from rabbit. This is Mannose-specific lectin 1 from Colocasia esculenta (Wild taro).